A 136-amino-acid polypeptide reads, in one-letter code: MSVCGGAPPPAILKEGDLEKRSDSFLQLWKKRRCVLTADGLHLYSDARKRGKAKVLRFDSLAKLECVEWKGERVYFTLVTLGGQEIDFRCRERSRWNAEITLALVGFQNRRAVRELRERKEHQARDNGERLRSWGP.

Residues 12–105 enclose the PH domain; the sequence is ILKEGDLEKR…WNAEITLALV (94 aa).

It belongs to the PHLDA2 family.

It localises to the cytoplasm. It is found in the membrane. Plays a role in regulating placenta growth. May act via its PH domain that competes with other PH domain-containing proteins, thereby preventing their binding to membrane lipids. This chain is Pleckstrin homology-like domain family A member 2 (phlda2), found in Xenopus tropicalis (Western clawed frog).